The sequence spans 520 residues: UDP-N-acetylmuramoyl-L-alanyl-D-glutamate--2,6-diaminopimelate ligase (520 aa).

Leu-48 is a binding site for UDP-N-acetyl-alpha-D-muramoyl-L-alanyl-D-glutamate. Residue 134-140 (GTSGKTT) participates in ATP binding. UDP-N-acetyl-alpha-D-muramoyl-L-alanyl-D-glutamate is bound by residues 176–177 (TT), Ser-203, and Arg-211. An N6-carboxylysine modification is found at Lys-243. Meso-2,6-diaminopimelate contacts are provided by residues Arg-405, 429-432 (DNPR), Gly-483, and Glu-487. The Meso-diaminopimelate recognition motif signature appears at 429–432 (DNPR).

Belongs to the MurCDEF family. MurE subfamily. Mg(2+) is required as a cofactor. In terms of processing, carboxylation is probably crucial for Mg(2+) binding and, consequently, for the gamma-phosphate positioning of ATP.

The protein resides in the cytoplasm. The catalysed reaction is UDP-N-acetyl-alpha-D-muramoyl-L-alanyl-D-glutamate + meso-2,6-diaminopimelate + ATP = UDP-N-acetyl-alpha-D-muramoyl-L-alanyl-gamma-D-glutamyl-meso-2,6-diaminopimelate + ADP + phosphate + H(+). The protein operates within cell wall biogenesis; peptidoglycan biosynthesis. Its function is as follows. Catalyzes the addition of meso-diaminopimelic acid to the nucleotide precursor UDP-N-acetylmuramoyl-L-alanyl-D-glutamate (UMAG) in the biosynthesis of bacterial cell-wall peptidoglycan. The polypeptide is UDP-N-acetylmuramoyl-L-alanyl-D-glutamate--2,6-diaminopimelate ligase (Mycolicibacterium paratuberculosis (strain ATCC BAA-968 / K-10) (Mycobacterium paratuberculosis)).